The primary structure comprises 365 residues: uncharacterized protein (365 aa).

The Cytoplasmic segment spans residues 1–133; it reads MVLAKQWVLK…RKLDKNKVGK (133 aa). A helical membrane pass occupies residues 134-154; that stretch reads LWWYLSVLGGTSLTAYFIFFT. Residues 155–169 are Extracellular-facing; that stretch reads YAQLQEREEDYGKVY. The helical transmembrane segment at 170 to 190 threads the bilayer; it reads LISGAAGAVGTVCIQLALNVF. Residues 191–365 are Cytoplasmic-facing; it reads KASKVIAIAG…KLITKVNNEE (175 aa).

It is found in the membrane. This is an uncharacterized protein from Saccharomyces cerevisiae (strain ATCC 204508 / S288c) (Baker's yeast).